Consider the following 306-residue polypeptide: Protein FAM228A (306 aa).

The interval 237-277 (HASKLSQQNKGAEKKGLALGTRAQRPRSWAAADSPQGTPLV) is disordered. Phosphoserine is present on S270.

It belongs to the FAM228 family.

In Rattus norvegicus (Rat), this protein is Protein FAM228A (Fam228a).